Reading from the N-terminus, the 492-residue chain is Serine incorporator 4 (492 aa).

10 helical membrane passes run 59–79, 113–133, 148–168, 179–199, 219–239, 254–274, 281–301, 330–350, 421–441, and 464–484; these read YILL…KTVV, AVYR…VLLV, SFWS…FCIP, IGIC…TAFA, GVSL…VLLF, LLSL…APCI, SGLL…FSAL, IPDT…VLFA, GFHF…TNWF, and VASC…PLLA.

Belongs to the TDE1 family.

Its subcellular location is the membrane. Incorporates a polar amino acid serine into membranes and facilitates the synthesis of two serine-derived lipids, phosphatidylserine and sphingolipids. The polypeptide is Serine incorporator 4 (Serinc4) (Mus musculus (Mouse)).